Reading from the N-terminus, the 553-residue chain is Protein Early 65 kDa (553 aa).

The protein localises to the host cytoplasm. Its function is as follows. May participate in the recruitment of G-actin to the host nucleus. The chain is Protein Early 65 kDa (HE65) from Autographa californica nuclear polyhedrosis virus (AcMNPV).